The following is a 627-amino-acid chain: Myelin-associated glycoprotein (627 aa).

The first 19 residues, 1-19, serve as a signal peptide directing secretion; the sequence is MIFLATLPLFWIMISASRG. The interval 20–325 is interaction with RTN4R and RTN4RL2; sequence GHWGAWMPST…RTVELSVMYA (306 aa). Residues 20 to 516 are Extracellular-facing; it reads GHWGAWMPST…HRLMWAKIGP (497 aa). W22 carries C-linked (Man) tryptophan glycosylation. The Ig-like V-type domain occupies 22 to 120; it reads WGAWMPSTIS…LGGKYYFRGD (99 aa). 3 cysteine pairs are disulfide-bonded: C37-C165, C42-C100, and C159-C217. 65-67 provides a ligand contact to a ganglioside GT1b (d18:1(4E)); the sequence is YPK. N-linked (GlcNAc...) asparagine glycosylation occurs at N99. Residues R118 and 124–128 contribute to the a ganglioside GT1b (d18:1(4E)) site; that span reads YNQYT. 4 consecutive Ig-like C2-type domains span residues 139–237, 241–325, 327–412, and 413–508; these read NTPN…LDVK, VIVE…VMYA, WKPT…VEFA, and PIIL…GAHR. N223 and N246 each carry an N-linked (GlcNAc...) asparagine glycan. C261 and C305 form a disulfide bridge. N315 and N332 each carry an N-linked (GlcNAc...) asparagine glycan. C347 and C392 are joined by a disulfide. A glycan (N-linked (GlcNAc...) asparagine) is linked at N406. 2 disulfide bridges follow: C421–C430 and C432–C488. N450 and N454 each carry an N-linked (GlcNAc...) asparagine glycan. Residues 517–536 form a helical membrane-spanning segment; it reads VGAVVAFAILIAIVCYITQT. The S-palmitoyl cysteine moiety is linked to residue C531. At 537 to 627 the chain is on the cytoplasmic side; that stretch reads RRKKNVTESS…LAEYAEIRVK (91 aa). Phosphoserine is present on residues S545, S547, S549, and S591. The interval 578 to 627 is required for normal axon myelination in the central nervous system; sequence LGSERRLLGLRGESPELDLSYSHSDLGKRPTKDSYTLTEELAEYAEIRVK.

The protein belongs to the immunoglobulin superfamily. SIGLEC (sialic acid binding Ig-like lectin) family. Monomer and homodimer. Interacts (via the first three N-terminal Ig-like domains) with RTN4R and RTN4RL2. Interacts with isoform 2 of BSG. In terms of processing, N-glycosylated. Phosphorylated on tyrosine residues. Post-translationally, ubiquitinated, leading to proteasomal degradation. As to expression, detected in the myelin tract in brain, especially in the corpus callosum and in peripheral nerve. Expressed by myelinating glial cells in the central and peripheral nervous system. Detected in oligodendrocyte processes before formation of compact myelin. Restricted to the periaxonal space after myelination. Isoform S-MAG is the predominant isoform in CNS and PNS of the adult (at protein level).

It is found in the cell membrane. The protein localises to the membrane raft. Functionally, adhesion molecule that mediates interactions between myelinating cells and neurons by binding to neuronal sialic acid-containing gangliosides and to the glycoproteins RTN4R and RTN4RL2. Not required for initial myelination, but seems to play a role in the maintenance of normal axon myelination. Protects motoneurons against apoptosis, also after injury; protection against apoptosis is probably mediated via interaction with neuronal RTN4R and RTN4RL2. Required to prevent degeneration of myelinated axons in adults; this probably depends on binding to gangliosides on the axon cell membrane. Negative regulator of neurite outgrowth that inhibits axon longitudinal growth. Negative regulator of neurite outgrowth; in dorsal root ganglion neurons the inhibition is mediated primarily via binding to neuronal RTN4R or RTN4RL2 and to a lesser degree via binding to neuronal gangliosides. In cerebellar granule cells the inhibition is mediated via binding to neuronal gangliosides. In sensory neurons, inhibition of neurite extension depends only partially on RTN4R, RTN4RL2 and gangliosides. Inhibits axon outgrowth by binding to RTN4R. Preferentially binds to alpha-2,3-linked sialic acid. Binds ganglioside Gt1b. The chain is Myelin-associated glycoprotein (Mag) from Mus musculus (Mouse).